The primary structure comprises 1162 residues: MEEVRCPEHGTFCFLKTGVRDGPNKGKSFYVCRADTCSFVRATDIPVSHCLLHEDFVVELQGLLLPQDKKEYRLFFRCIRSKAEGKRWCGSIPWQDPDSKEHSVSNKSQHASETFHHSSNWLRNPFKVLDKNQEPALWKQLIKGEGEEKKADKKQREKGDQLFDQKKEQKPEMMEKDLSSGLVPKKKQSVVQEKKQEEGAEIQCEAETGGTHKRDFSEIKSQQCQGNELTRPSASSQEKSSGKSQDVQRESEPLREKVTQLLPQNVHSHNSISKPQKGGPLNKEYTNWEAKETKAKDGPSIQATQKSLPQGHFQERPETHSVPAPGGPAAQAAPAAPGLSLGEGREAATSSDDEEEDDVVFVSSKPGSPLLFDSTLDLETKENLQFPDRSVQRKVSPASGVSKKVEPSDPVARRVYLTTQLKQKKSTLASVNIQALPDKGQKLIKQIQELEEVLSGLTLSPEQGTNEKSNSQVPQQSHFTKTTTGPPHLVPPQPLPRRGTQPVGSLELKSACQVTAGGSSQCYRGHTNQDHVHAVWKITSEAIGQLHRSLESCPGETVVAEDPAGLKVPLLLHQKQALAWLLWRESQKPQGGILADDMGLGKTLTMIALILTQKNQEKKEEKEKSTALTWLSKDDSCDFTSHGTLIICPASLIHHWKNEVEKRVNSNKLRVYLYHGPNRDSRARVLSTYDIVITTYSLVAKEIPTNKQEAEIPGANLNVEGTSTPLLRIAWARIILDEAHNVKNPRVQTSIAVCKLQACARWAVTGTPIQNNLLDMYSLLKFLRCSPFDEFNLWRSQVDNGSKKGGERLSILTKSLLLRRTKDQLDSTGRPLVILPQRKFQLHHLKLSEDEETVYNVFFARSRSALQSYLKRHESRGNQSGRSPNNPFSRVALEFGSEEPRHSEAADSPRSSTVHILSQLLRLRQCCCHLSLLKSALDPMELKGEGLVLSLEEQLSALTLSELRDSEPSSTVSLNGTFFKMELFEGMRESTKISSLLAELEAIQRNSASQKSVIVSQWTNMLKVVALHLKKHGLTYATIDGSVNPKQRMDLVEAFNHSRGPQVMLISLLAGGVGLNLTGGNHLFLLDMHWNPSLEDQACDRIYRVGQQKDVVIHRFVCEGTVEEKILQLQEKKKDLAKQVLSGSGESVTKLTLADLRVLFGI.

Zn(2+) contacts are provided by cysteine 6, histidine 9, cysteine 32, and cysteine 37. A GRF-type zinc finger spans residues 6-46; that stretch reads CPEHGTFCFLKTGVRDGPNKGKSFYVCRADTCSFVRATDIP. Disordered stretches follow at residues 97 to 116, 142 to 358, 388 to 407, and 459 to 503; these read PDSK…ETFH, IKGE…EEDD, DRSV…KVEP, and LSPE…TQPV. Residues 105–116 are compositionally biased toward polar residues; the sequence is SNKSQHASETFH. The span at 142–178 shows a compositional bias: basic and acidic residues; sequence IKGEGEEKKADKKQREKGDQLFDQKKEQKPEMMEKDL. A Glycyl lysine isopeptide (Lys-Gly) (interchain with G-Cter in SUMO2) cross-link involves residue lysine 143. Over residues 219 to 232 the composition is skewed to polar residues; it reads IKSQQCQGNELTRP. Residues 233–245 show a composition bias toward low complexity; it reads SASSQEKSSGKSQ. The span at 246-258 shows a compositional bias: basic and acidic residues; sequence DVQRESEPLREKV. Over residues 261-274 the composition is skewed to polar residues; that stretch reads LLPQNVHSHNSISK. Residues 323–338 show a composition bias toward low complexity; sequence PAPGGPAAQAAPAAPG. The segment covering 459–485 has biased composition (polar residues); the sequence is LSPEQGTNEKSNSQVPQQSHFTKTTTG. A Phosphoserine modification is found at serine 460. In terms of domain architecture, Helicase ATP-binding spans 583–786; sequence WRESQKPQGG…YSLLKFLRCS (204 aa). ATP is bound at residue 596–603; sequence DDMGLGKT. Residues 737-740 carry the DEAH box motif; that stretch reads DEAH. The interval 871 to 890 is disordered; sequence KRHESRGNQSGRSPNNPFSR. Over residues 877–888 the composition is skewed to polar residues; the sequence is GNQSGRSPNNPF. Phosphoserine is present on residues serine 883 and serine 908. Positions 995–1157 constitute a Helicase C-terminal domain; the sequence is SLLAELEAIQ…VTKLTLADLR (163 aa).

Belongs to the SNF2/RAD54 helicase family. Interacts with CDC5L. Part of the spliceosome.

It localises to the cytoplasm. The protein resides in the nucleus. Functionally, dsDNA-dependent ATPase which acts as a transcription termination factor by coupling ATP hydrolysis with removal of RNA polymerase II from the DNA template. May contribute to mitotic transcription repression. May also be involved in pre-mRNA splicing. The sequence is that of Transcription termination factor 2 (TTF2) from Homo sapiens (Human).